Consider the following 190-residue polypeptide: Glutathione peroxidase 2 (190 aa).

Selenocysteine 40 is a catalytic residue. A non-standard amino acid (selenocysteine) is located at residue selenocysteine 40.

Belongs to the glutathione peroxidase family. Homotetramer.

Its subcellular location is the cytoplasm. It is found in the cytosol. It carries out the reaction 2 glutathione + H2O2 = glutathione disulfide + 2 H2O. It catalyses the reaction a hydroperoxy polyunsaturated fatty acid + 2 glutathione = a hydroxy polyunsaturated fatty acid + glutathione disulfide + H2O. The enzyme catalyses tert-butyl hydroperoxide + 2 glutathione = tert-butanol + glutathione disulfide + H2O. The catalysed reaction is cumene hydroperoxide + 2 glutathione = 2-phenylpropan-2-ol + glutathione disulfide + H2O. It carries out the reaction (13S)-hydroperoxy-(9Z,11E)-octadecadienoate + 2 glutathione = (13S)-hydroxy-(9Z,11E)-octadecadienoate + glutathione disulfide + H2O. It catalyses the reaction (5S)-hydroperoxy-(6E,8Z,11Z,14Z)-eicosatetraenoate + 2 glutathione = (5S)-hydroxy-(6E,8Z,11Z,14Z)-eicosatetraenoate + glutathione disulfide + H2O. The enzyme catalyses (12R)-hydroperoxy-(5Z,8Z,10E,14Z)-eicosatetraenoate + 2 glutathione = (12R)-hydroxy-(5Z,8Z,10E,14Z)-eicosatetraenoate + glutathione disulfide + H2O. The catalysed reaction is (15S)-hydroperoxy-(5Z,8Z,11Z,13E)-eicosatetraenoate + 2 glutathione = (15S)-hydroxy-(5Z,8Z,11Z,13E)-eicosatetraenoate + glutathione disulfide + H2O. In terms of biological role, catalyzes the reduction of hydroperoxides in a glutathione-dependent manner thus regulating cellular redox homeostasis. Can reduce small soluble hydroperoxides such as H2O2, cumene hydroperoxide and tert-butyl hydroperoxide, as well as several fatty acid-derived hydroperoxides. Cannot reduce phosphatidycholine hydroperoxide. This chain is Glutathione peroxidase 2 (GPX2), found in Pongo pygmaeus (Bornean orangutan).